The chain runs to 96 residues: UPF0235 protein Helmi_20270 (96 aa).

The protein belongs to the UPF0235 family.

The protein is UPF0235 protein Helmi_20270 of Heliobacterium modesticaldum (strain ATCC 51547 / Ice1).